The sequence spans 334 residues: Probable fructose-bisphosphate aldolase class 1 (334 aa).

It belongs to the class I fructose-bisphosphate aldolase family.

The catalysed reaction is beta-D-fructose 1,6-bisphosphate = D-glyceraldehyde 3-phosphate + dihydroxyacetone phosphate. It functions in the pathway carbohydrate degradation; glycolysis; D-glyceraldehyde 3-phosphate and glycerone phosphate from D-glucose: step 4/4. The sequence is that of Probable fructose-bisphosphate aldolase class 1 from Xylella fastidiosa (strain 9a5c).